A 766-amino-acid polypeptide reads, in one-letter code: MGRRRLLVWLCAVAALLSGAQARGTPLLARPAPPGASRYSLYTTGWRPRLRPGPHKALCAYVVHRNVTCILQEGAESYVKAEYRQCRWGPKCPGTVTYRTVLRPKYKVGYKTVTDLAWRCCPGFTGKRCPEHLTDHGAASPQLEPEPQIPSGQLDPGPRPPSYSRAAPSPHGRKGPGLFGERLERLEGDVQRLAQTYGTLSGLVASHEDPNRMTGGPRAPAVPVGFGVIPEGLVGPGDRARGPLTPPLDEILSKVTEVSNTLQTKVQLLDKVHGLALGHEAHLQRLREAPPSPLTSLALLEEYVDRRLHRLWGSLLDGFEQKLQGVQSECDLRVQEVRRQCEEGQAASRRLHQSLDGRELALRQELSQLGSQLQGLSVSGRGSCCGQLALINARMDGLERALQAVTETQRGPGAPAGDELTRLSAAMLEGGVDGLLEGLETLNGTEGGARGCCLRLDMGGWGVGGFGTMLEERVQSLEERLATLAGELSHDSASPGRSARPLVQTELAVLEQRLVSLETSCTPSTTSAILDSLVAEVKAWQSRSEALLRQVASHAALLQQLNGTVAEVQGQLAEGTGSSLQGEITLLKVNLNSVSKSLTGLSDSVSQYSDAFLAANTSLDERERKVEAEVQAIQEQVSSQGSRLQAGHRQVLNLRGELEQLKAGVAKVASGLSRCQDTAQKLQHTVGHFDQRVAQVEGACRRLGLLAAGLDSLPTEPLRPREGLWSHVDQLNRTLAQHTQDIARLRDDLLDCQAQLAEQVRPGQAN.

An N-terminal signal peptide occupies residues 1–22 (MGRRRLLVWLCAVAALLSGAQA). Residues 55–131 (HKALCAYVVH…PGFTGKRCPE (77 aa)) enclose the EMI domain. Disulfide bonds link cysteine 59–cysteine 121, cysteine 86–cysteine 92, and cysteine 120–cysteine 129. N-linked (GlcNAc...) asparagine glycosylation occurs at asparagine 66. The tract at residues 132-179 (HLTDHGAASPQLEPEPQIPSGQLDPGPRPPSYSRAAPSPHGRKGPGLF) is disordered. An N-linked (GlcNAc...) asparagine glycan is attached at asparagine 443. The stretch at 467–491 (GTMLEERVQSLEERLATLAGELSHD) forms a coiled coil. N-linked (GlcNAc...) asparagine glycosylation is found at asparagine 562, asparagine 616, and asparagine 732. Coiled-coil stretches lie at residues 615-663 (ANTS…QLKA) and 726-761 (SHVD…EQVR).

It is found in the secreted. Its subcellular location is the extracellular space. The protein localises to the extracellular matrix. The sequence is that of EMILIN-3 (EMILIN3) from Homo sapiens (Human).